A 435-amino-acid polypeptide reads, in one-letter code: Eukaryotic translation initiation factor 3 subunit E (435 aa).

The region spanning 219-392 is the PCI domain; the sequence is FFNHAKGRDL…GHVVMGTQPL (174 aa).

It belongs to the eIF-3 subunit E family. Component of the eukaryotic translation initiation factor 3 (eIF-3) complex.

It is found in the cytoplasm. Its function is as follows. Component of the eukaryotic translation initiation factor 3 (eIF-3) complex, which is involved in protein synthesis of a specialized repertoire of mRNAs and, together with other initiation factors, stimulates binding of mRNA and methionyl-tRNAi to the 40S ribosome. The eIF-3 complex specifically targets and initiates translation of a subset of mRNAs involved in cell proliferation. In Aedes aegypti (Yellowfever mosquito), this protein is Eukaryotic translation initiation factor 3 subunit E (eIF3-S6).